The following is a 272-amino-acid chain: 27-O-demethylrifamycin SV methyltransferase (272 aa).

Residues Ser-89, Gln-94, 117 to 118 (DA), Leu-134, and His-139 contribute to the S-adenosyl-L-methionine site.

It belongs to the class I-like SAM-binding methyltransferase superfamily. As to quaternary structure, exists probably as a trimer.

It carries out the reaction 27-O-demethylrifamycin SV + S-adenosyl-L-methionine = rifamycin SV + S-adenosyl-L-homocysteine + H(+). It functions in the pathway antibiotic biosynthesis; rifamycin B biosynthesis. With respect to regulation, slightly inhibited by Ca(2+) and Mg(2+). Strongly inhibited by Zn(2+), Ni(2+) and Co(2+). Its function is as follows. Catalyzes the methylation of 27-O-demethylrifamycin SV (DMRSV) to rifamycin SV. In Amycolatopsis mediterranei (strain S699) (Nocardia mediterranei), this protein is 27-O-demethylrifamycin SV methyltransferase.